We begin with the raw amino-acid sequence, 102 residues long: Small ribosomal subunit protein uS10 (102 aa).

This sequence belongs to the universal ribosomal protein uS10 family. As to quaternary structure, part of the 30S ribosomal subunit.

In terms of biological role, involved in the binding of tRNA to the ribosomes. This is Small ribosomal subunit protein uS10 from Gluconobacter oxydans (strain 621H) (Gluconobacter suboxydans).